A 217-amino-acid chain; its full sequence is tRNA (guanine-N(7)-)-methyltransferase (217 aa).

S-adenosyl-L-methionine contacts are provided by Glu56, Glu81, Asp108, and Asp130. Residue Asp130 is part of the active site. Lys134 and Asp166 together coordinate substrate.

Belongs to the class I-like SAM-binding methyltransferase superfamily. TrmB family.

The enzyme catalyses guanosine(46) in tRNA + S-adenosyl-L-methionine = N(7)-methylguanosine(46) in tRNA + S-adenosyl-L-homocysteine. It participates in tRNA modification; N(7)-methylguanine-tRNA biosynthesis. In terms of biological role, catalyzes the formation of N(7)-methylguanine at position 46 (m7G46) in tRNA. The sequence is that of tRNA (guanine-N(7)-)-methyltransferase from Neorickettsia sennetsu (strain ATCC VR-367 / Miyayama) (Ehrlichia sennetsu).